Reading from the N-terminus, the 256-residue chain is DNA repair protein RecO (256 aa).

Belongs to the RecO family.

In terms of biological role, involved in DNA repair and RecF pathway recombination. The protein is DNA repair protein RecO of Streptococcus pneumoniae serotype 2 (strain D39 / NCTC 7466).